Here is a 591-residue protein sequence, read N- to C-terminus: Aspartate--tRNA(Asp/Asn) ligase (591 aa).

Residue glutamate 176 participates in L-aspartate binding. Residues 200–203 (QLFK) are aspartate. Residue arginine 222 participates in L-aspartate binding. ATP contacts are provided by residues 222 to 224 (RDE) and glutamine 231. Histidine 450 serves as a coordination point for L-aspartate. Glutamate 484 contributes to the ATP binding site. L-aspartate is bound at residue arginine 491. 536–539 (GLDR) contacts ATP.

It belongs to the class-II aminoacyl-tRNA synthetase family. Type 1 subfamily. Homodimer.

It localises to the cytoplasm. The catalysed reaction is tRNA(Asx) + L-aspartate + ATP = L-aspartyl-tRNA(Asx) + AMP + diphosphate. Its function is as follows. Aspartyl-tRNA synthetase with relaxed tRNA specificity since it is able to aspartylate not only its cognate tRNA(Asp) but also tRNA(Asn). Reaction proceeds in two steps: L-aspartate is first activated by ATP to form Asp-AMP and then transferred to the acceptor end of tRNA(Asp/Asn). The polypeptide is Aspartate--tRNA(Asp/Asn) ligase (Bacillus anthracis (strain A0248)).